A 257-amino-acid polypeptide reads, in one-letter code: 1-(5-phosphoribosyl)-5-[(5-phosphoribosylamino)methylideneamino] imidazole-4-carboxamide isomerase (257 aa).

The active-site Proton acceptor is aspartate 8. Aspartate 129 (proton donor) is an active-site residue.

The protein belongs to the HisA/HisF family.

It is found in the cytoplasm. It catalyses the reaction 1-(5-phospho-beta-D-ribosyl)-5-[(5-phospho-beta-D-ribosylamino)methylideneamino]imidazole-4-carboxamide = 5-[(5-phospho-1-deoxy-D-ribulos-1-ylimino)methylamino]-1-(5-phospho-beta-D-ribosyl)imidazole-4-carboxamide. It functions in the pathway amino-acid biosynthesis; L-histidine biosynthesis; L-histidine from 5-phospho-alpha-D-ribose 1-diphosphate: step 4/9. This Gloeothece citriformis (strain PCC 7424) (Cyanothece sp. (strain PCC 7424)) protein is 1-(5-phosphoribosyl)-5-[(5-phosphoribosylamino)methylideneamino] imidazole-4-carboxamide isomerase.